The chain runs to 335 residues: Beta-ketoacyl-[acyl-carrier-protein] synthase III (335 aa).

Catalysis depends on residues cysteine 118 and histidine 259. The ACP-binding stretch occupies residues 260–264; sequence QANER. Asparagine 289 is an active-site residue.

Belongs to the thiolase-like superfamily. FabH family. Homodimer.

Its subcellular location is the cytoplasm. The enzyme catalyses malonyl-[ACP] + acetyl-CoA + H(+) = 3-oxobutanoyl-[ACP] + CO2 + CoA. Its pathway is lipid metabolism; fatty acid biosynthesis. In terms of biological role, catalyzes the condensation reaction of fatty acid synthesis by the addition to an acyl acceptor of two carbons from malonyl-ACP. Catalyzes the first condensation reaction which initiates fatty acid synthesis and may therefore play a role in governing the total rate of fatty acid production. Possesses both acetoacetyl-ACP synthase and acetyl transacylase activities. Its substrate specificity determines the biosynthesis of branched-chain and/or straight-chain of fatty acids. In Chlamydia caviae (strain ATCC VR-813 / DSM 19441 / 03DC25 / GPIC) (Chlamydophila caviae), this protein is Beta-ketoacyl-[acyl-carrier-protein] synthase III.